Reading from the N-terminus, the 561-residue chain is Proline--tRNA ligase (561 aa).

Belongs to the class-II aminoacyl-tRNA synthetase family. ProS type 1 subfamily. Homodimer.

Its subcellular location is the cytoplasm. The enzyme catalyses tRNA(Pro) + L-proline + ATP = L-prolyl-tRNA(Pro) + AMP + diphosphate. In terms of biological role, catalyzes the attachment of proline to tRNA(Pro) in a two-step reaction: proline is first activated by ATP to form Pro-AMP and then transferred to the acceptor end of tRNA(Pro). As ProRS can inadvertently accommodate and process non-cognate amino acids such as alanine and cysteine, to avoid such errors it has two additional distinct editing activities against alanine. One activity is designated as 'pretransfer' editing and involves the tRNA(Pro)-independent hydrolysis of activated Ala-AMP. The other activity is designated 'posttransfer' editing and involves deacylation of mischarged Ala-tRNA(Pro). The misacylated Cys-tRNA(Pro) is not edited by ProRS. This Wigglesworthia glossinidia brevipalpis protein is Proline--tRNA ligase.